Reading from the N-terminus, the 445-residue chain is C-terminal-binding protein 2 (445 aa).

Asymmetric dimethylarginine is present on Arg22. NAD(+) is bound by residues Ser106, 186–191 (IGFGRT), Asp210, 243–249 (CNLNEHN), 270–272 (AAR), and Asp296. Arg272 is an active-site residue. Residue Glu301 is part of the active site. The Proton donor role is filled by His321. Residue 321-324 (HTAW) coordinates NAD(+). The segment at 414-445 (THNLPTVAHPSQAPSPNQPTKHGDNREHPNEQ) is disordered. Ser428 bears the Phosphoserine mark. Basic and acidic residues predominate over residues 434–445 (KHGDNREHPNEQ).

The protein belongs to the D-isomer specific 2-hydroxyacid dehydrogenase family. In terms of assembly, can form homodimers or heterodimers of CTBP1 and CTBP2. Interacts with HIPK2 and ZNF217. Interacts with PRDM16; represses white adipose tissue (WAT)-specific genes expression. Interacts with PNN, NRIP1 and WIZ. Interacts with MCRIP1. (Microbial infection) Interacts with human adenovirus 5 E1A protein; this interaction seems to potentiate viral replication. Ubiquitous. Highest levels in heart, skeletal muscle, and pancreas.

The protein resides in the nucleus. It localises to the synapse. Corepressor targeting diverse transcription regulators. Functions in brown adipose tissue (BAT) differentiation. Functionally, isoform 2 probably acts as a scaffold for specialized synapses. This chain is C-terminal-binding protein 2 (CTBP2), found in Homo sapiens (Human).